The following is a 233-amino-acid chain: Fibrillarin-like rRNA/tRNA 2'-O-methyltransferase (233 aa).

S-adenosyl-L-methionine contacts are provided by residues 90 to 91, 109 to 110, 134 to 135, and 154 to 157; these read TT, EF, DA, and DVAQ.

The protein belongs to the methyltransferase superfamily. Fibrillarin family. Interacts with nop5. Component of box C/D small ribonucleoprotein (sRNP) particles that contain rpl7ae, FlpA and nop5, plus a guide RNA.

In terms of biological role, involved in pre-rRNA and tRNA processing. Utilizes the methyl donor S-adenosyl-L-methionine to catalyze the site-specific 2'-hydroxyl methylation of ribose moieties in rRNA and tRNA. Site specificity is provided by a guide RNA that base pairs with the substrate. Methylation occurs at a characteristic distance from the sequence involved in base pairing with the guide RNA. The chain is Fibrillarin-like rRNA/tRNA 2'-O-methyltransferase from Aeropyrum pernix (strain ATCC 700893 / DSM 11879 / JCM 9820 / NBRC 100138 / K1).